Reading from the N-terminus, the 553-residue chain is Dihydroxy-acid dehydratase (553 aa).

Asp-78 provides a ligand contact to Mg(2+). Residue Cys-119 participates in [2Fe-2S] cluster binding. Mg(2+) contacts are provided by Asp-120 and Lys-121. Lys-121 bears the N6-carboxylysine mark. Cys-193 contacts [2Fe-2S] cluster. A Mg(2+)-binding site is contributed by Glu-441. Ser-467 (proton acceptor) is an active-site residue.

It belongs to the IlvD/Edd family. Homodimer. It depends on [2Fe-2S] cluster as a cofactor. The cofactor is Mg(2+).

The enzyme catalyses (2R)-2,3-dihydroxy-3-methylbutanoate = 3-methyl-2-oxobutanoate + H2O. It carries out the reaction (2R,3R)-2,3-dihydroxy-3-methylpentanoate = (S)-3-methyl-2-oxopentanoate + H2O. Its pathway is amino-acid biosynthesis; L-isoleucine biosynthesis; L-isoleucine from 2-oxobutanoate: step 3/4. The protein operates within amino-acid biosynthesis; L-valine biosynthesis; L-valine from pyruvate: step 3/4. In terms of biological role, functions in the biosynthesis of branched-chain amino acids. Catalyzes the dehydration of (2R,3R)-2,3-dihydroxy-3-methylpentanoate (2,3-dihydroxy-3-methylvalerate) into 2-oxo-3-methylpentanoate (2-oxo-3-methylvalerate) and of (2R)-2,3-dihydroxy-3-methylbutanoate (2,3-dihydroxyisovalerate) into 2-oxo-3-methylbutanoate (2-oxoisovalerate), the penultimate precursor to L-isoleucine and L-valine, respectively. This is Dihydroxy-acid dehydratase from Trichlorobacter lovleyi (strain ATCC BAA-1151 / DSM 17278 / SZ) (Geobacter lovleyi).